We begin with the raw amino-acid sequence, 388 residues long: Mannitol-1-phosphate 5-dehydrogenase (388 aa).

5–16 (AIQFGGGNIGRG) contacts NAD(+). K213 is an active-site residue.

It belongs to the mannitol dehydrogenase family. As to quaternary structure, monomer.

The catalysed reaction is D-mannitol 1-phosphate + NAD(+) = beta-D-fructose 6-phosphate + NADH + H(+). Its function is as follows. Catalyzes the NAD(H)-dependent interconversion of D-fructose 6-phosphate and D-mannitol 1-phosphate in the mannitol metabolic pathway. This is Mannitol-1-phosphate 5-dehydrogenase (mpdA) from Aspergillus clavatus (strain ATCC 1007 / CBS 513.65 / DSM 816 / NCTC 3887 / NRRL 1 / QM 1276 / 107).